Reading from the N-terminus, the 89-residue chain is Small ribosomal subunit protein uS15 (89 aa).

It belongs to the universal ribosomal protein uS15 family. In terms of assembly, part of the 30S ribosomal subunit. Forms a bridge to the 50S subunit in the 70S ribosome, contacting the 23S rRNA.

Functionally, one of the primary rRNA binding proteins, it binds directly to 16S rRNA where it helps nucleate assembly of the platform of the 30S subunit by binding and bridging several RNA helices of the 16S rRNA. Forms an intersubunit bridge (bridge B4) with the 23S rRNA of the 50S subunit in the ribosome. This Frankia alni (strain DSM 45986 / CECT 9034 / ACN14a) protein is Small ribosomal subunit protein uS15.